The sequence spans 476 residues: mRNA cap guanine-N(7) methyltransferase (476 aa).

Basic and acidic residues predominate over residues 1–14 (MANSTKAEEYEKMS). A disordered region spans residues 1–128 (MANSTKAEEY…TGDGTQNKRK (128 aa)). Residues 20-50 (ASVNSEAESSFSINENTTASGTGLSGKTSVC) show a composition bias toward polar residues. Phosphoserine is present on residues Ser-24, Ser-28, and Ser-29. Composition is skewed to basic and acidic residues over residues 54-68 (DTAR…DLVK), 84-93 (LDPEIVPEEK), and 107-117 (RETEDVPKDEY). Ser-118 bears the Phosphoserine mark. Positions 126 to 128 (KRK) match the Nuclear localization signal motif. Positions 167–475 (SRIFYLRNFN…IYLVFAFEKQ (309 aa)) constitute an mRNA cap 0 methyltransferase domain. 176-177 (NN) is an mRNA binding site. S-adenosyl-L-methionine contacts are provided by Lys-180, Gly-205, Asp-227, Asp-261, Gln-284, and Tyr-289.

Belongs to the class I-like SAM-binding methyltransferase superfamily. mRNA cap 0 methyltransferase family. Interacts with importin alpha, leading to stimulate both RNA-binding and methyltransferase activity. Interaction with importin alpha and beta is required for its nuclear localization, importin beta dissociating in response to RanGTP, allowing RNMT-importin alpha to bind RNA substrates. Interacts with elongating form of polymerase II and RNGTT. Interacts with RAMAC, this interaction significantly enhances RNA-binding and cap methyltransferase activity.

Its subcellular location is the nucleus. The enzyme catalyses a 5'-end (5'-triphosphoguanosine)-ribonucleoside in mRNA + S-adenosyl-L-methionine = a 5'-end (N(7)-methyl 5'-triphosphoguanosine)-ribonucleoside in mRNA + S-adenosyl-L-homocysteine. With respect to regulation, methyltransferase activity is activated by RAMAC. In terms of biological role, catalytic subunit of the mRNA-capping methyltransferase RNMT:RAMAC complex that methylates the N7 position of the added guanosine to the 5'-cap structure of mRNAs. Binds RNA containing 5'-terminal GpppC. The sequence is that of mRNA cap guanine-N(7) methyltransferase (RNMT) from Macaca fascicularis (Crab-eating macaque).